A 224-amino-acid chain; its full sequence is UPF0758 protein HEAR2468 (224 aa).

One can recognise an MPN domain in the interval 102-224 (ALNSPQAVKQ…VYSFAEQGQL (123 aa)). Positions 173, 175, and 186 each coordinate Zn(2+). Positions 173–186 (HNHPSGTPEPSAAD) match the JAMM motif motif.

The protein belongs to the UPF0758 family.

In Herminiimonas arsenicoxydans, this protein is UPF0758 protein HEAR2468.